We begin with the raw amino-acid sequence, 127 residues long: Large ribosomal subunit protein uL22 (127 aa).

The protein belongs to the universal ribosomal protein uL22 family. Part of the 50S ribosomal subunit.

Its function is as follows. This protein binds specifically to 23S rRNA; its binding is stimulated by other ribosomal proteins, e.g. L4, L17, and L20. It is important during the early stages of 50S assembly. It makes multiple contacts with different domains of the 23S rRNA in the assembled 50S subunit and ribosome. Functionally, the globular domain of the protein is located near the polypeptide exit tunnel on the outside of the subunit, while an extended beta-hairpin is found that lines the wall of the exit tunnel in the center of the 70S ribosome. This Methylobacterium sp. (strain 4-46) protein is Large ribosomal subunit protein uL22.